A 363-amino-acid chain; its full sequence is Chorismate synthase (363 aa).

Position 48 (Arg-48) interacts with NADP(+). FMN is bound by residues 125 to 127 (RSS), 238 to 239 (NA), Gly-278, 293 to 297 (KPTAS), and Arg-319.

The protein belongs to the chorismate synthase family. As to quaternary structure, homotetramer. Requires FMNH2 as cofactor.

The enzyme catalyses 5-O-(1-carboxyvinyl)-3-phosphoshikimate = chorismate + phosphate. It functions in the pathway metabolic intermediate biosynthesis; chorismate biosynthesis; chorismate from D-erythrose 4-phosphate and phosphoenolpyruvate: step 7/7. In terms of biological role, catalyzes the anti-1,4-elimination of the C-3 phosphate and the C-6 proR hydrogen from 5-enolpyruvylshikimate-3-phosphate (EPSP) to yield chorismate, which is the branch point compound that serves as the starting substrate for the three terminal pathways of aromatic amino acid biosynthesis. This reaction introduces a second double bond into the aromatic ring system. This is Chorismate synthase from Acinetobacter baumannii (strain AB0057).